A 178-amino-acid chain; its full sequence is Nicotinamide-nucleotide adenylyltransferase (178 aa).

The protein belongs to the archaeal NMN adenylyltransferase family.

Its subcellular location is the cytoplasm. It catalyses the reaction beta-nicotinamide D-ribonucleotide + ATP + H(+) = diphosphate + NAD(+). It functions in the pathway cofactor biosynthesis; NAD(+) biosynthesis; NAD(+) from nicotinamide D-ribonucleotide: step 1/1. The chain is Nicotinamide-nucleotide adenylyltransferase from Caldivirga maquilingensis (strain ATCC 700844 / DSM 13496 / JCM 10307 / IC-167).